Here is a 371-residue protein sequence, read N- to C-terminus: UDP-N-acetylglucosamine--N-acetylmuramyl-(pentapeptide) pyrophosphoryl-undecaprenol N-acetylglucosamine transferase (371 aa).

UDP-N-acetyl-alpha-D-glucosamine contacts are provided by residues 15 to 17 (TGG), Asn-126, Arg-172, Ser-199, Ile-256, 275 to 280 (ALTVSE), and Gln-301.

The protein belongs to the glycosyltransferase 28 family. MurG subfamily.

The protein localises to the cell inner membrane. The enzyme catalyses di-trans,octa-cis-undecaprenyl diphospho-N-acetyl-alpha-D-muramoyl-L-alanyl-D-glutamyl-meso-2,6-diaminopimeloyl-D-alanyl-D-alanine + UDP-N-acetyl-alpha-D-glucosamine = di-trans,octa-cis-undecaprenyl diphospho-[N-acetyl-alpha-D-glucosaminyl-(1-&gt;4)]-N-acetyl-alpha-D-muramoyl-L-alanyl-D-glutamyl-meso-2,6-diaminopimeloyl-D-alanyl-D-alanine + UDP + H(+). It functions in the pathway cell wall biogenesis; peptidoglycan biosynthesis. Its function is as follows. Cell wall formation. Catalyzes the transfer of a GlcNAc subunit on undecaprenyl-pyrophosphoryl-MurNAc-pentapeptide (lipid intermediate I) to form undecaprenyl-pyrophosphoryl-MurNAc-(pentapeptide)GlcNAc (lipid intermediate II). In Francisella tularensis subsp. holarctica (strain FTNF002-00 / FTA), this protein is UDP-N-acetylglucosamine--N-acetylmuramyl-(pentapeptide) pyrophosphoryl-undecaprenol N-acetylglucosamine transferase.